The following is a 213-amino-acid chain: StAR-related lipid transfer protein 5 (213 aa).

The START domain occupies 1–213 (MDPALAAQMS…LQKAVKQFHE (213 aa)).

Functionally, may be involved in the intracellular transport of sterols or other lipids. May bind cholesterol or other sterols. The chain is StAR-related lipid transfer protein 5 (STARD5) from Pongo abelii (Sumatran orangutan).